The primary structure comprises 121 residues: Small ribosomal subunit protein uS13 (121 aa).

Residues 94 to 121 (DLPVRGQRTKTNARTRKGPRKSGVQLKK) are disordered. A compositionally biased stretch (basic residues) spans 100 to 121 (QRTKTNARTRKGPRKSGVQLKK).

This sequence belongs to the universal ribosomal protein uS13 family. As to quaternary structure, part of the 30S ribosomal subunit. Forms a loose heterodimer with protein S19. Forms two bridges to the 50S subunit in the 70S ribosome.

Functionally, located at the top of the head of the 30S subunit, it contacts several helices of the 16S rRNA. In the 70S ribosome it contacts the 23S rRNA (bridge B1a) and protein L5 of the 50S subunit (bridge B1b), connecting the 2 subunits; these bridges are implicated in subunit movement. Contacts the tRNAs in the A and P-sites. The chain is Small ribosomal subunit protein uS13 from Polynucleobacter necessarius subsp. necessarius (strain STIR1).